The sequence spans 618 residues: MSKVIGIDLGTTNSCVAVMEGGDPVVIANSEGARTTPSVVSFQANGERLVGQVAKRQSITNPDKTIISIKREMGTNHKVNIDGKQYTPQEISAMVLQKIKADAEAYLGETVTQAVITVPAYFNDSQRQATKDAGKIAGLEVLRIINEPTAAALAYGMDKMDTNQKIFVYDLGGGTFDVSILELGDGVFEVKATNGDTHLGGDDFDKKIIDYIADTFKADNGIDLKNDKMALQRLKEAAEKAKIELSSSTQTNINLPFITADATGPKHIDMSLTRAKFNELTQDLVDRTIEPMKKALNDAGLTINDINKVILVGGSTRIPAVQEAVKSFTGKEPSKGVNPDECVAMGAAIQAGVLTGDVKDVLLLDVTPLTLGIETLGGVATPLIERNTTIPTKKSQVFSTAADGQTSVEIHVVQGERQMAADNKTLGRFTLSGIAPAPRGVPQIEVTFDIDANGIVNVSAKDKGTGKEANITITASTNLSDDEIDKAVKEAEKFEEQDKKRKESIEIKNNADQVVYQTEKTLKDLGDKVSSEDKKAIEEKVEAVKKVKDGDDLEAIKKATEDLTQTFYGISSKIYSQNAEPGADGGANSGANPGGTTGNTDTKDDNVVDAEYKVDDDK.

T175 carries the post-translational modification Phosphothreonine; by autocatalysis. The segment at 576 to 618 (SQNAEPGADGGANSGANPGGTTGNTDTKDDNVVDAEYKVDDDK) is disordered. Residues 583–597 (ADGGANSGANPGGTT) show a composition bias toward gly residues. Residues 601–618 (DTKDDNVVDAEYKVDDDK) show a composition bias toward basic and acidic residues.

It belongs to the heat shock protein 70 family.

Functionally, acts as a chaperone. This is Chaperone protein DnaK from Clostridium kluyveri (strain NBRC 12016).